A 190-amino-acid chain; its full sequence is Remorin (190 aa).

Residues 1–12 (MAEEQKTSKVDV) show a composition bias toward basic and acidic residues. Disordered regions lie at residues 1 to 45 (MAEE…VESK) and 50 to 69 (VEKP…SADR). A Phosphoserine modification is found at serine 14. Threonine 58 is subject to Phosphothreonine. The stretch at 92–147 (EKSKAENRAQKKISDVHAWENSKKAAVEAQLRKIEEKLEKKKAQYGEKMKNKVAAI) forms a coiled coil.

Belongs to the remorin family. As to quaternary structure, may polymerize to form filamentous structures. Expressed in roots, leaves, stems, flowers and siliques, with a maximal expression in apical regions.

Exhibits a non sequence-specific DNA-binding activity. This chain is Remorin (DBP), found in Arabidopsis thaliana (Mouse-ear cress).